Consider the following 565-residue polypeptide: Dihydroxy-acid dehydratase (565 aa).

C53 provides a ligand contact to [2Fe-2S] cluster. Residue D85 participates in Mg(2+) binding. C126 is a binding site for [2Fe-2S] cluster. The Mg(2+) site is built by D127 and K128. K128 bears the N6-carboxylysine mark. Position 198 (C198) interacts with [2Fe-2S] cluster. E450 is a Mg(2+) binding site. The active-site Proton acceptor is the S476.

The protein belongs to the IlvD/Edd family. As to quaternary structure, homodimer. The cofactor is [2Fe-2S] cluster. Requires Mg(2+) as cofactor.

It catalyses the reaction (2R)-2,3-dihydroxy-3-methylbutanoate = 3-methyl-2-oxobutanoate + H2O. It carries out the reaction (2R,3R)-2,3-dihydroxy-3-methylpentanoate = (S)-3-methyl-2-oxopentanoate + H2O. Its pathway is amino-acid biosynthesis; L-isoleucine biosynthesis; L-isoleucine from 2-oxobutanoate: step 3/4. It participates in amino-acid biosynthesis; L-valine biosynthesis; L-valine from pyruvate: step 3/4. Functions in the biosynthesis of branched-chain amino acids. Catalyzes the dehydration of (2R,3R)-2,3-dihydroxy-3-methylpentanoate (2,3-dihydroxy-3-methylvalerate) into 2-oxo-3-methylpentanoate (2-oxo-3-methylvalerate) and of (2R)-2,3-dihydroxy-3-methylbutanoate (2,3-dihydroxyisovalerate) into 2-oxo-3-methylbutanoate (2-oxoisovalerate), the penultimate precursor to L-isoleucine and L-valine, respectively. The sequence is that of Dihydroxy-acid dehydratase from Synechococcus sp. (strain JA-2-3B'a(2-13)) (Cyanobacteria bacterium Yellowstone B-Prime).